Reading from the N-terminus, the 167-residue chain is MGVKKSLQTGGNLLNLLSSILTVLSTTTNYWTRQQGGHSGLWQECTHGKCSNIPCQNTVAVSAACMVLAATFSIVALGIGIRIQCREAESRRSQNTIVLLFLSGLLLLIALAVYTSKNAWKPEVFFSWSYFFGWLALPFLFIAGFCFLLADMILQSTEAISGFPVCL.

4 helical membrane passes run 13 to 32 (LLNLLSSILTVLSTTTNYWT), 61 to 81 (VSAACMVLAATFSIVALGIGI), 96 to 116 (TIVLLFLSGLLLLIALAVYTS), and 130 to 150 (YFFGWLALPFLFIAGFCFLLA).

The protein belongs to the PMP-22/EMP/MP20 family.

The protein localises to the membrane. This Mus musculus (Mouse) protein is Claudin domain-containing protein 2 (Cldnd2).